The primary structure comprises 236 residues: LexA repressor (236 aa).

A DNA-binding region (H-T-H motif) is located at residues 26-46; sequence FDEMKEALDLASKSGIHRLIT. Residues 84-107 are disordered; that stretch reads SPSVIEGGQGRSSPAPRPAANNDD. Active-site for autocatalytic cleavage activity residues include S157 and K195.

This sequence belongs to the peptidase S24 family. In terms of assembly, homodimer.

It carries out the reaction Hydrolysis of Ala-|-Gly bond in repressor LexA.. Represses a number of genes involved in the response to DNA damage (SOS response), including recA and lexA. In the presence of single-stranded DNA, RecA interacts with LexA causing an autocatalytic cleavage which disrupts the DNA-binding part of LexA, leading to derepression of the SOS regulon and eventually DNA repair. This chain is LexA repressor, found in Chelativorans sp. (strain BNC1).